The primary structure comprises 413 residues: Putative glutamate--cysteine ligase 2 (413 aa).

Residues 392–413 (GGVCALSTPQGDPLPGWAERLH) form a disordered region.

It belongs to the glutamate--cysteine ligase type 2 family. YbdK subfamily.

The catalysed reaction is L-cysteine + L-glutamate + ATP = gamma-L-glutamyl-L-cysteine + ADP + phosphate + H(+). ATP-dependent carboxylate-amine ligase which exhibits weak glutamate--cysteine ligase activity. The polypeptide is Putative glutamate--cysteine ligase 2 (Bordetella bronchiseptica (strain ATCC BAA-588 / NCTC 13252 / RB50) (Alcaligenes bronchisepticus)).